A 321-amino-acid polypeptide reads, in one-letter code: XylDLEGF operon transcriptional activator 1 (321 aa).

The 102-residue stretch at 214 to 315 folds into the HTH araC/xylS-type domain; that stretch reads ERVVQFIEEN…GELPSDTLRQ (102 aa). DNA-binding regions (H-T-H motif) lie at residues 231–252 and 282–305; these read ERLA…EKHA and ITEI…RSAF.

It localises to the cytoplasm. Regulatory protein of the TOL plasmid xyl operons. XylS activates the xylXYZLTEGFJQKIH operon required for the degradation of toluene, m-xylene and p-xylene. The chain is XylDLEGF operon transcriptional activator 1 (xylS1) from Pseudomonas putida (Arthrobacter siderocapsulatus).